Reading from the N-terminus, the 591-residue chain is Parathyroid hormone/parathyroid hormone-related peptide receptor (591 aa).

Positions 1 to 26 are cleaved as a signal peptide; that stretch reads MGAARIAPSLALLLCCPVLSSAYALV. Over 27–188 the chain is Extracellular; that stretch reads DADDVFTKEE…REREVFDRLG (162 aa). Intrachain disulfides connect C48–C117, C108–C148, and C131–C170. Residues 67-104 form a disordered region; sequence KGWTPASTSGKPRKEKASGKFYPESKENKDVPTGSRRR. Over residues 81 to 96 the composition is skewed to basic and acidic residues; it reads EKASGKFYPESKENKD. N-linked (GlcNAc...) asparagine glycosylation is found at N151, N161, N166, and N176. Residues 189–212 traverse the membrane as a helical segment; sequence MIYTVGYSMSLASLTVAVLILAYF. Residues 213-219 lie on the Cytoplasmic side of the membrane; that stretch reads RRLHCTR. The helical transmembrane segment at 220–239 threads the bilayer; it reads NYIHMHMFLSFMLRAASIFV. At 240-282 the chain is on the extracellular side; the sequence is KDAVLYSGFTLDEAERLTEEELHIIAQVPPPPAAAAVGYAGCR. Residues 283–306 form a helical membrane-spanning segment; the sequence is VAVTFFLYFLATNYYWILVEGLYL. Residues 307–320 are Cytoplasmic-facing; the sequence is HSLIFMAFFSEKKY. Residues 321 to 342 traverse the membrane as a helical segment; it reads LWGFTIFGWGLPAVFVAVWVGV. At 343–361 the chain is on the extracellular side; it reads RATLANTGCWDLSSGHKKW. Residues 362 to 382 form a helical membrane-spanning segment; sequence IIQVPILASVVLNFILFINII. The Cytoplasmic portion of the chain corresponds to 383-409; that stretch reads RVLATKLRETNAGRCDTRQQYRKLLRS. The helical transmembrane segment at 410–428 threads the bilayer; that stretch reads TLVLVPLFGVHYTVFMALP. Residues 429–440 lie on the Extracellular side of the membrane; the sequence is YTEVSGTLWQIQ. The helical transmembrane segment at 441 to 463 threads the bilayer; it reads MHYEMLFNSFQGFFVAIIYCFCN. Residues 464-591 lie on the Cytoplasmic side of the membrane; that stretch reads GEVQAEIRKS…LLQEEWETVM (128 aa). The Important for interaction with G proteins signature appears at 474–477; the sequence is WSRW. The segment at 516–544 is disordered; it reads LPLSPRLPPATTNGHSQLPGHAKPGAPAT.

Belongs to the G-protein coupled receptor 2 family. In terms of assembly, homodimer in the absence of bound ligand. Peptide hormone binding leads to dissociation of the homodimer. Post-translationally, N-glycosylated.

Its subcellular location is the cell membrane. Its function is as follows. G-protein-coupled receptor for parathyroid hormone (PTH) and for parathyroid hormone-related peptide (PTHLH). Ligand binding causes a conformation change that triggers signaling via guanine nucleotide-binding proteins (G proteins) and modulates the activity of downstream effectors, such as adenylate cyclase (cAMP). PTH1R is coupled to G(s) G alpha proteins and mediates activation of adenylate cyclase activity. PTHLH dissociates from PTH1R more rapidly than PTH; as consequence, the cAMP response induced by PTHLH decays faster than the response induced by PTH. This chain is Parathyroid hormone/parathyroid hormone-related peptide receptor (Pth1r), found in Rattus norvegicus (Rat).